We begin with the raw amino-acid sequence, 433 residues long: Malate synthase (433 aa).

16-17 (TS) is a binding site for acetyl-CoA. D52 is a Mg(2+) binding site. R84 contacts acetyl-CoA. Glyoxylate-binding positions include R84, E158, and 191–192 (VD). Residues E158 and D192 each contribute to the Mg(2+) site. Acetyl-CoA is bound by residues R236 and L259. Catalysis depends on D388, which acts as the Proton acceptor.

The protein belongs to the HpcH/HpaI aldolase family. In terms of assembly, homotrimer and homohexamer in equilibrium. Requires Mg(2+) as cofactor.

The protein resides in the cytoplasm. It carries out the reaction glyoxylate + acetyl-CoA + H2O = (S)-malate + CoA + H(+). It functions in the pathway carbohydrate metabolism; glyoxylate cycle; (S)-malate from isocitrate: step 2/2. Functionally, involved in the glyoxylate cycle which synthesizes precursors for carbohydrates from C2 compounds such as acetate. Catalyzes the Claisen condensation between acetyl-coenzyme A (acetyl-CoA) and glyoxylate to form the malyl-CoA intermediate that is subsequently hydrolyzed to produce malate and CoA. This is Malate synthase (aceB) from Haloferax volcanii (strain ATCC 29605 / DSM 3757 / JCM 8879 / NBRC 14742 / NCIMB 2012 / VKM B-1768 / DS2) (Halobacterium volcanii).